The primary structure comprises 1984 residues: Vitellogenin receptor Yl (1984 aa).

Residues methionine 1–serine 19 show a composition bias toward basic and acidic residues. The disordered stretch occupies residues methionine 1–arginine 48. N-linked (GlcNAc...) asparagine glycosylation is present at asparagine 30. Polar residues predominate over residues asparagine 30 to arginine 48. LDL-receptor class A domains follow at residues arginine 89 to aspartate 125, leucine 128 to proline 167, serine 183 to lysine 221, threonine 226 to leucine 263, and leucine 265 to histidine 305. 20 cysteine pairs are disulfide-bonded: cysteine 90–cysteine 102, cysteine 97–cysteine 115, cysteine 109–cysteine 124, cysteine 129–cysteine 144, cysteine 137–cysteine 157, cysteine 151–cysteine 166, cysteine 184–cysteine 197, cysteine 191–cysteine 210, cysteine 204–cysteine 220, cysteine 227–cysteine 239, cysteine 234–cysteine 253, cysteine 247–cysteine 262, cysteine 266–cysteine 281, cysteine 275–cysteine 294, cysteine 288–cysteine 304, cysteine 310–cysteine 321, cysteine 315–cysteine 331, cysteine 352–cysteine 363, cysteine 359–cysteine 372, and cysteine 374–cysteine 387. The 38-residue stretch at serine 306–glutamate 343 folds into the EGF-like 1 domain. The EGF-like 2; calcium-binding domain maps to aspartate 348 to arginine 388. N-linked (GlcNAc...) asparagine glycans are attached at residues asparagine 365, asparagine 384, and asparagine 429. LDL-receptor class B repeat units lie at residues serine 441–threonine 485, glutamine 486–lysine 528, glycine 529–glutamine 572, and glutamine 573–glutamine 615. N-linked (GlcNAc...) asparagine glycosylation is found at asparagine 666, asparagine 749, and asparagine 782. 4 LDL-receptor class B repeats span residues glycine 750–serine 792, arginine 793–glutamate 836, glutamine 884–aspartate 925, and proline 934–histidine 940. N-linked (GlcNAc...) asparagine glycosylation is present at asparagine 1022. LDL-receptor class A domains follow at residues threonine 1024–aspartate 1063, leucine 1073–glutamate 1110, lysine 1117–glutamate 1153, arginine 1157–valine 1194, and serine 1197–glycine 1233. 15 disulfide bridges follow: cysteine 1025–cysteine 1040, cysteine 1035–cysteine 1053, cysteine 1047–cysteine 1062, cysteine 1074–cysteine 1087, cysteine 1081–cysteine 1100, cysteine 1094–cysteine 1109, cysteine 1118–cysteine 1130, cysteine 1125–cysteine 1143, cysteine 1137–cysteine 1152, cysteine 1158–cysteine 1170, cysteine 1165–cysteine 1183, cysteine 1177–cysteine 1193, cysteine 1198–cysteine 1210, cysteine 1205–cysteine 1223, and cysteine 1217–cysteine 1232. Asparagine 1240 carries N-linked (GlcNAc...) asparagine glycosylation. LDL-receptor class A domains lie at serine 1242–glycine 1280 and valine 1282–glutamate 1319. Disulfide bonds link cysteine 1243–cysteine 1257, cysteine 1250–cysteine 1270, cysteine 1264–cysteine 1279, cysteine 1283–cysteine 1296, cysteine 1290–cysteine 1309, and cysteine 1303–cysteine 1318. Asparagine 1265 carries N-linked (GlcNAc...) asparagine glycosylation. The N-linked (GlcNAc...) asparagine glycan is linked to asparagine 1326. In terms of domain architecture, LDL-receptor class A 13 spans serine 1339–alanine 1376. Intrachain disulfides connect cysteine 1340-cysteine 1352, cysteine 1347-cysteine 1365, cysteine 1359-cysteine 1375, cysteine 1422-cysteine 1432, and cysteine 1428-cysteine 1441. Residues aspartate 1418–arginine 1453 form the EGF-like 3; calcium-binding domain. N-linked (GlcNAc...) asparagine glycans are attached at residues asparagine 1475 and asparagine 1490. LDL-receptor class B repeat units follow at residues alanine 1588 to glutamine 1637 and glutamine 1638 to asparagine 1687. Residues tryptophan 1800 to tyrosine 1820 traverse the membrane as a helical segment. Topologically, residues tyrosine 1821–serine 1984 are cytoplasmic. Serine 1926 carries the post-translational modification Phosphoserine. Disordered regions lie at residues lysine 1927–proline 1951 and serine 1965–serine 1984. Residues aspartate 1932 to valine 1946 are compositionally biased toward gly residues.

The protein belongs to the LDLR family. In terms of assembly, interacts with osk (isoform A). As to expression, ovary.

The protein resides in the cell membrane. The protein localises to the cytoplasm. Its subcellular location is the cell cortex. It is found in the cytoplasmic vesicle. It localises to the clathrin-coated vesicle membrane. The protein resides in the early endosome membrane. The protein localises to the endosome. Its subcellular location is the multivesicular body lumen. Cell surface receptor involved in uptake of vitellogenins (yolk proteins) into developing oocytes by receptor-mediated endocytosis. May also mediate uptake of apolpp/apolipophorins and their incorporation into yolk granules. Along with its ligands, required for maintenance of microtubule plus-end orientation towards the posterior pole of oocytes. Involved in polarized localization of germ plasm components, such as osk mRNA and vas protein, to the oocyte posterior cortex. Receptor-mediated endocytosis of vitellogenin receptor ligands is critical for osk (isoform A) mediated actin reorganization and the anchoring of germ plasm components to the oocyte cortex. This Drosophila melanogaster (Fruit fly) protein is Vitellogenin receptor Yl.